A 379-amino-acid chain; its full sequence is Protein RecA (379 aa).

G79 to T86 is a binding site for ATP.

This sequence belongs to the RecA family.

It localises to the cytoplasm. In terms of biological role, can catalyze the hydrolysis of ATP in the presence of single-stranded DNA, the ATP-dependent uptake of single-stranded DNA by duplex DNA, and the ATP-dependent hybridization of homologous single-stranded DNAs. It interacts with LexA causing its activation and leading to its autocatalytic cleavage. This is Protein RecA from Streptococcus agalactiae.